The sequence spans 38 residues: MAQTNSNKKTVELNRTSLYWGLLLIFVLAVLFSSYIFN.

The helical transmembrane segment at 17 to 37 (SLYWGLLLIFVLAVLFSSYIF) threads the bilayer.

Belongs to the PsbL family. In terms of assembly, PSII is composed of 1 copy each of membrane proteins PsbA, PsbB, PsbC, PsbD, PsbE, PsbF, PsbH, PsbI, PsbJ, PsbK, PsbL, PsbM, PsbT, PsbY, PsbZ, Psb30/Ycf12, at least 3 peripheral proteins of the oxygen-evolving complex and a large number of cofactors. It forms dimeric complexes.

Its subcellular location is the plastid. It is found in the chloroplast thylakoid membrane. In terms of biological role, one of the components of the core complex of photosystem II (PSII). PSII is a light-driven water:plastoquinone oxidoreductase that uses light energy to abstract electrons from H(2)O, generating O(2) and a proton gradient subsequently used for ATP formation. It consists of a core antenna complex that captures photons, and an electron transfer chain that converts photonic excitation into a charge separation. This subunit is found at the monomer-monomer interface and is required for correct PSII assembly and/or dimerization. The sequence is that of Photosystem II reaction center protein L from Euglena gracilis.